The primary structure comprises 190 residues: Nucleoside triphosphate pyrophosphatase (190 aa).

Residue Asp-69 is the Proton acceptor of the active site.

The protein belongs to the Maf family. It depends on a divalent metal cation as a cofactor.

Its subcellular location is the cytoplasm. It carries out the reaction a ribonucleoside 5'-triphosphate + H2O = a ribonucleoside 5'-phosphate + diphosphate + H(+). It catalyses the reaction a 2'-deoxyribonucleoside 5'-triphosphate + H2O = a 2'-deoxyribonucleoside 5'-phosphate + diphosphate + H(+). Nucleoside triphosphate pyrophosphatase. May have a dual role in cell division arrest and in preventing the incorporation of modified nucleotides into cellular nucleic acids. This chain is Nucleoside triphosphate pyrophosphatase, found in Helicobacter pylori (strain ATCC 700392 / 26695) (Campylobacter pylori).